The primary structure comprises 181 residues: NADH-quinone oxidoreductase subunit B (181 aa).

Residues Cys-60, Cys-61, Cys-125, and Cys-155 each coordinate [4Fe-4S] cluster.

Belongs to the complex I 20 kDa subunit family. As to quaternary structure, NDH-1 is composed of 14 different subunits. Subunits NuoB, C, D, E, F, and G constitute the peripheral sector of the complex. [4Fe-4S] cluster is required as a cofactor.

The protein resides in the cell inner membrane. It catalyses the reaction a quinone + NADH + 5 H(+)(in) = a quinol + NAD(+) + 4 H(+)(out). Its function is as follows. NDH-1 shuttles electrons from NADH, via FMN and iron-sulfur (Fe-S) centers, to quinones in the respiratory chain. Couples the redox reaction to proton translocation (for every two electrons transferred, four hydrogen ions are translocated across the cytoplasmic membrane), and thus conserves the redox energy in a proton gradient. This chain is NADH-quinone oxidoreductase subunit B, found in Novosphingobium aromaticivorans (strain ATCC 700278 / DSM 12444 / CCUG 56034 / CIP 105152 / NBRC 16084 / F199).